A 394-amino-acid polypeptide reads, in one-letter code: 2-aminobenzenesulfonate 2,3-dioxygenase subunit alpha (394 aa).

Residues 43–154 enclose the Rieske domain; the sequence is WKFVCHVSEI…TETYLGLVFV (112 aa). [2Fe-2S] cluster contacts are provided by C85, H87, C105, and H108. The Fe cation site is built by H209 and H213.

The protein belongs to the bacterial ring-hydroxylating dioxygenase alpha subunit family. As to quaternary structure, heterotetramer with a alpha2beta2 structure. [2Fe-2S] cluster serves as cofactor. It depends on Fe cation as a cofactor.

The catalysed reaction is 2-aminobenzenesulfonate + NADH + O2 + 2 H(+) = 2,3-dihydroxybenzenesulfonate + NH4(+) + NAD(+). With respect to regulation, inhibited by o-phenanthroline. In terms of biological role, alpha subunit of the oxygenase component of the 2-aminobenzenesulfonate 2,3-dioxygenase system (deaminating) (ABSDOS). Can use 2-aminobenzenesulfonate (ABS), benzenesulfonate (BS), 4-toluenesulfonate (TS), 2-nitrobenzenesulfonate, 3- and 4-aminobenzenesulfonates, 4-chloro- and 4-hydroxybenzenesulfonates and pyridine-3-sulfonate as substrates. No desulfonation of ABS to aminocatechol or aminophenol detected. This Alcaligenes sp protein is 2-aminobenzenesulfonate 2,3-dioxygenase subunit alpha.